The chain runs to 211 residues: MNKKKMDLPKCQSITVACEGECSQMYNLHNPLTFEMGLGNIFICVRCFKIHFCNMLEDCNLINTHEGCVCSKTGLFYNGWMPAYSHTCMEPTEEPNMETVNVVVVLLSYVYSFLIQNKARYSNIIRDIIKDGKFIEQVENAVFCTFNKVFKNSTLNKLPLTTVSQLFVQLIIGGHAEGTIYDNNVIRVSRRKREDNILKKMRIEYGNALAL.

It belongs to the herpesviridae UL92 family.

This Human herpesvirus 7 (strain JI) (HHV-7) protein is Protein U63 (U63).